The sequence spans 366 residues: Galactoside alpha-(1,2)-fucosyltransferase 1 (366 aa).

Topologically, residues 1 to 8 (MWPLSHRH) are cytoplasmic. A helical; Signal-anchor for type II membrane protein membrane pass occupies residues 9-25 (LCLAFLLVCVLSAISFF). Topologically, residues 26–366 (LHIHQDSFPH…LSPLWTLAEP (341 aa)) are lumenal. N-linked (GlcNAc...) asparagine glycosylation is found at Asn66, Asn302, and Asn328.

The protein belongs to the glycosyltransferase 11 family.

Its subcellular location is the golgi apparatus. The protein localises to the golgi stack membrane. The catalysed reaction is a beta-D-galactosyl-(1-&gt;4)-N-acetyl-beta-D-glucosaminyl derivative + GDP-beta-L-fucose = an alpha-L-Fuc-(1-&gt;2)-beta-D-Gal-(1-&gt;4)-beta-D-GlcNAc derivative + GDP + H(+). It carries out the reaction a ganglioside GA1 + GDP-beta-L-fucose = a ganglioside Fuc-GA1 + GDP + H(+). The enzyme catalyses a beta-D-Gal-(1-&gt;3)-beta-D-GlcNAc-(1-&gt;3)-beta-D-Gal-(1-&gt;4)-beta-D-Glc-(1&lt;-&gt;1')-Cer(d18:1(4E)) + GDP-beta-L-fucose = alpha-L-fucosyl-(1-&gt;2)- beta-D-galactosyl-(1-&gt;3)-N-acetyl-beta-D-glucosaminyl-(1-&gt;3)-beta-D-galactosyl-(1-&gt;4)-beta-D-glucosyl-(1&lt;-&gt;1')-N-acylsphing-4-enine + GDP + H(+). It catalyses the reaction a neolactoside nLc4Cer(d18:1(4E)) + GDP-beta-L-fucose = a neolactoside IV(2)-alpha-Fuc-nLc4Cer(d18:1(4E)) + GDP + H(+). The catalysed reaction is a ganglioside GM1 + GDP-beta-L-fucose = a ganglioside Fuc-GM1 + GDP + H(+). It carries out the reaction beta-D-galactosyl-(1-&gt;3)-N-acetyl-D-galactosamine + GDP-beta-L-fucose = alpha-L-fucosyl-(1-&gt;2)-beta-D-galactosyl-(1-&gt;3)-N-acetyl-D-galactosamine + GDP + H(+). It functions in the pathway protein modification; protein glycosylation. Functionally, catalyzes the transfer of L-fucose, from a guanosine diphosphate-beta-L-fucose, to the terminal galactose residue of glycoconjugates through an alpha(1,2) linkage leading to H antigen synthesis that is an intermediate substrate in the synthesis of ABO blood group antigens. H antigen is essential for maturation of the glomerular layer of the main olfactory bulb, in cell migration and early cell-cell contacts during tumor associated angiogenesis. Preferentially fucosylates soluble lactose and to a lesser extent fucosylates glycolipids gangliosides GA1 and GM1a. In Lagothrix lagotricha (Brown woolly monkey), this protein is Galactoside alpha-(1,2)-fucosyltransferase 1.